Consider the following 517-residue polypeptide: MAALGPSSQNVTEYVVRVPKNTTKKYNIMAFNAADKVNFATWNQARLERDLSNKKIYQEEEMPESGAGSEFNRKLREEARRKKYGIVLKEFRPEDQPWLLRVNGKSGRKFKGIKKGGVTENTSYYIFTQCPDGAFEAFPVHNWYNFTPLARHRTLTAEEAEEEWERRNKVLNHFSIMQQRRLKDQDQDEDEEEKEKRGRRKASELRIHDLEDDLEMSSDASDASGEEGGRVPKAKKKAPLAKGGRKKKKKKGSDDEAFEDSDDGDFEGQEVDYMSDGSSSSQEEPESKAKAPQQEEGPKGVDEQSDSSEESEEEKPPEEDKEEEEEKKAPTPQEKKRRKDSSEESDSSEESDIDSEASSALFMAKKKTPPKRERKPSGGSSRGNSRPGTPSAEGGSTSSTLRAAASKLEQGKRVSEMPAAKRLRLDTGPQSLSGKSTPQPPSGKTTPNSGDVQVTEDAVRRYLTRKPMTTKDLLKKFQTKKTGLSSEQTVNVLAQILKRLNPERKMINDKMHFSLKE.

Alanine 2 carries the N-acetylalanine modification. Position 156 is a phosphothreonine (threonine 156). Positions 178–466 (QQRRLKDQDQ…DAVRRYLTRK (289 aa)) are disordered. Residues serine 217, serine 218, serine 221, and serine 224 each carry the phosphoserine modification. The segment covering 232 to 251 (PKAKKKAPLAKGGRKKKKKK) has biased composition (basic residues). Composition is skewed to acidic residues over residues 255-270 (DEAF…EGQE) and 303-325 (EQSD…EEEE). A Phosphothreonine modification is found at threonine 331. Positions 343-355 (EESDSSEESDIDS) are enriched in acidic residues. Residues 364–374 (AKKKTPPKRER) are compositionally biased toward basic residues. Serine 377, serine 380, serine 381, and serine 385 each carry phosphoserine. A compositionally biased stretch (low complexity) spans 377–391 (SGGSSRGNSRPGTPS). Threonine 389 carries the phosphothreonine modification. At serine 391 the chain carries Phosphoserine. The residue at position 407 (lysine 407) is an N6-acetyllysine. The segment covering 428 to 452 (GPQSLSGKSTPQPPSGKTTPNSGDV) has biased composition (polar residues). A phosphoserine mark is found at serine 431, serine 433, and serine 436. Phosphothreonine occurs at positions 437 and 446. At serine 449 the chain carries Phosphoserine. Glutamate 503, histidine 512, and glutamate 517 together coordinate Zn(2+).

Belongs to the TFIIF alpha subunit family. In terms of assembly, heterodimer of an alpha and a beta subunit. Interacts with GTF2F2, CTDP1, TAF6/TAFII80 and URI1. Interacts with GTF2B (via C-terminus and preferentially via acetylated form); this interaction prevents binding of GTF2B to GTF2F2. Part of TBP-based Pol II pre-initiation complex (PIC), in which Pol II core assembles with general transcription factors and other specific initiation factors including GTF2E1, GTF2E2, GTF2F1, GTF2F2, TCEA1, ERCC2, ERCC3, GTF2H2, GTF2H3, GTF2H4, GTF2H5, GTF2A1, GTF2A2, GTF2B and TBP; this large multi-subunit PIC complex mediates DNA unwinding and targets Pol II core to the transcription start site where the first phosphodiester bond forms. Phosphorylated on Ser and other residues by TAF1 and casein kinase II-like kinases.

It is found in the nucleus. TFIIF is a general transcription initiation factor that binds to RNA polymerase II and helps to recruit it to the initiation complex in collaboration with TFIIB. It promotes transcription elongation. This is General transcription factor IIF subunit 1 (GTF2F1) from Homo sapiens (Human).